The sequence spans 419 residues: Maltoporin 2 (419 aa).

The signal sequence occupies residues methionine 1–alanine 23.

The protein belongs to the porin LamB (TC 1.B.3) family. As to quaternary structure, homotrimer formed of three 18-stranded antiparallel beta-barrels, containing three independent channels.

It localises to the cell outer membrane. It catalyses the reaction beta-maltose(in) = beta-maltose(out). Functionally, involved in the transport of maltose and maltodextrins. The chain is Maltoporin 2 from Yersinia pestis bv. Antiqua (strain Antiqua).